Reading from the N-terminus, the 424-residue chain is Serine--tRNA ligase (424 aa).

L-serine is bound at residue 229-231 (TAE). ATP-binding positions include 259–261 (RKE) and V275. E282 contributes to the L-serine binding site. 349–352 (EVTS) lines the ATP pocket. Residue T383 coordinates L-serine.

Belongs to the class-II aminoacyl-tRNA synthetase family. Type-1 seryl-tRNA synthetase subfamily. In terms of assembly, homodimer. The tRNA molecule binds across the dimer.

The protein localises to the cytoplasm. It carries out the reaction tRNA(Ser) + L-serine + ATP = L-seryl-tRNA(Ser) + AMP + diphosphate + H(+). The catalysed reaction is tRNA(Sec) + L-serine + ATP = L-seryl-tRNA(Sec) + AMP + diphosphate + H(+). It functions in the pathway aminoacyl-tRNA biosynthesis; selenocysteinyl-tRNA(Sec) biosynthesis; L-seryl-tRNA(Sec) from L-serine and tRNA(Sec): step 1/1. Functionally, catalyzes the attachment of serine to tRNA(Ser). Is also able to aminoacylate tRNA(Sec) with serine, to form the misacylated tRNA L-seryl-tRNA(Sec), which will be further converted into selenocysteinyl-tRNA(Sec). This is Serine--tRNA ligase from Borrelia recurrentis (strain A1).